Here is a 330-residue protein sequence, read N- to C-terminus: Phenylalanine--tRNA ligase alpha subunit (330 aa).

E255 serves as a coordination point for Mg(2+).

It belongs to the class-II aminoacyl-tRNA synthetase family. Phe-tRNA synthetase alpha subunit type 1 subfamily. Tetramer of two alpha and two beta subunits. It depends on Mg(2+) as a cofactor.

The protein resides in the cytoplasm. It catalyses the reaction tRNA(Phe) + L-phenylalanine + ATP = L-phenylalanyl-tRNA(Phe) + AMP + diphosphate + H(+). The polypeptide is Phenylalanine--tRNA ligase alpha subunit (Acinetobacter baumannii (strain SDF)).